The chain runs to 364 residues: 3-dehydroquinate synthase (364 aa).

Residues 105–109 (GVVGD), 129–130 (TT), Lys142, and Lys151 each bind NAD(+). 3 residues coordinate Zn(2+): Glu184, His247, and His264.

Belongs to the sugar phosphate cyclases superfamily. Dehydroquinate synthase family. Co(2+) serves as cofactor. Zn(2+) is required as a cofactor. Requires NAD(+) as cofactor.

The protein resides in the cytoplasm. It catalyses the reaction 7-phospho-2-dehydro-3-deoxy-D-arabino-heptonate = 3-dehydroquinate + phosphate. The protein operates within metabolic intermediate biosynthesis; chorismate biosynthesis; chorismate from D-erythrose 4-phosphate and phosphoenolpyruvate: step 2/7. Functionally, catalyzes the conversion of 3-deoxy-D-arabino-heptulosonate 7-phosphate (DAHP) to dehydroquinate (DHQ). This Acidithiobacillus ferrooxidans (strain ATCC 23270 / DSM 14882 / CIP 104768 / NCIMB 8455) (Ferrobacillus ferrooxidans (strain ATCC 23270)) protein is 3-dehydroquinate synthase.